A 611-amino-acid polypeptide reads, in one-letter code: Dihydroxy-acid dehydratase (611 aa).

Asp-81 lines the Mg(2+) pocket. Residue Cys-122 coordinates [2Fe-2S] cluster. 2 residues coordinate Mg(2+): Asp-123 and Lys-124. Lys-124 bears the N6-carboxylysine mark. [2Fe-2S] cluster is bound at residue Cys-195. Residue Glu-491 coordinates Mg(2+). Ser-517 serves as the catalytic Proton acceptor.

Belongs to the IlvD/Edd family. Homodimer. It depends on [2Fe-2S] cluster as a cofactor. Requires Mg(2+) as cofactor.

It catalyses the reaction (2R)-2,3-dihydroxy-3-methylbutanoate = 3-methyl-2-oxobutanoate + H2O. The enzyme catalyses (2R,3R)-2,3-dihydroxy-3-methylpentanoate = (S)-3-methyl-2-oxopentanoate + H2O. It participates in amino-acid biosynthesis; L-isoleucine biosynthesis; L-isoleucine from 2-oxobutanoate: step 3/4. It functions in the pathway amino-acid biosynthesis; L-valine biosynthesis; L-valine from pyruvate: step 3/4. Its function is as follows. Functions in the biosynthesis of branched-chain amino acids. Catalyzes the dehydration of (2R,3R)-2,3-dihydroxy-3-methylpentanoate (2,3-dihydroxy-3-methylvalerate) into 2-oxo-3-methylpentanoate (2-oxo-3-methylvalerate) and of (2R)-2,3-dihydroxy-3-methylbutanoate (2,3-dihydroxyisovalerate) into 2-oxo-3-methylbutanoate (2-oxoisovalerate), the penultimate precursor to L-isoleucine and L-valine, respectively. This is Dihydroxy-acid dehydratase from Actinobacillus pleuropneumoniae serotype 5b (strain L20).